The primary structure comprises 907 residues: Protein translocase subunit SecA (907 aa).

Residues Q87, G105–T109, and D512 contribute to the ATP site. Zn(2+) contacts are provided by C891, C893, C902, and H903.

It belongs to the SecA family. In terms of assembly, monomer and homodimer. Part of the essential Sec protein translocation apparatus which comprises SecA, SecYEG and auxiliary proteins SecDF-YajC and YidC. Zn(2+) serves as cofactor.

It is found in the cell inner membrane. The protein localises to the cytoplasm. The enzyme catalyses ATP + H2O + cellular proteinSide 1 = ADP + phosphate + cellular proteinSide 2.. Functionally, part of the Sec protein translocase complex. Interacts with the SecYEG preprotein conducting channel. Has a central role in coupling the hydrolysis of ATP to the transfer of proteins into and across the cell membrane, serving both as a receptor for the preprotein-SecB complex and as an ATP-driven molecular motor driving the stepwise translocation of polypeptide chains across the membrane. In Tolumonas auensis (strain DSM 9187 / NBRC 110442 / TA 4), this protein is Protein translocase subunit SecA.